Here is a 498-residue protein sequence, read N- to C-terminus: DEAD-box ATP-dependent RNA helicase 12 (498 aa).

A disordered region spans residues methionine 1–glutamine 114. A compositionally biased stretch (low complexity) spans serine 27–glutamine 65. The segment covering glycine 74–asparagine 96 has biased composition (polar residues). The Q motif signature appears at asparagine 124–glutamate 152. A Helicase ATP-binding domain is found at isoleucine 155–isoleucine 325. Alanine 168–threonine 175 contributes to the ATP binding site. Residue threonine 230 is modified to Phosphothreonine. The DEAD box motif lies at aspartate 273 to aspartate 276. The Helicase C-terminal domain occupies glycine 335 to isoleucine 495.

This sequence belongs to the DEAD box helicase family. DDX6/DHH1 subfamily.

The protein localises to the cytoplasm. The protein resides in the P-body. It carries out the reaction ATP + H2O = ADP + phosphate + H(+). In terms of biological role, ATP-dependent RNA helicase involved in mRNA turnover, and more specifically in mRNA decapping. The sequence is that of DEAD-box ATP-dependent RNA helicase 12 (RH12) from Arabidopsis thaliana (Mouse-ear cress).